The following is a 333-amino-acid chain: Tetraacyldisaccharide 4'-kinase (333 aa).

ATP is bound at residue 60–67 (TVGGTGKT).

It belongs to the LpxK family.

The enzyme catalyses a lipid A disaccharide + ATP = a lipid IVA + ADP + H(+). Its pathway is glycolipid biosynthesis; lipid IV(A) biosynthesis; lipid IV(A) from (3R)-3-hydroxytetradecanoyl-[acyl-carrier-protein] and UDP-N-acetyl-alpha-D-glucosamine: step 6/6. Transfers the gamma-phosphate of ATP to the 4'-position of a tetraacyldisaccharide 1-phosphate intermediate (termed DS-1-P) to form tetraacyldisaccharide 1,4'-bis-phosphate (lipid IVA). In Azotobacter vinelandii (strain DJ / ATCC BAA-1303), this protein is Tetraacyldisaccharide 4'-kinase.